Reading from the N-terminus, the 269-residue chain is 2-dehydro-3-deoxyphosphooctonate aldolase (269 aa).

This sequence belongs to the KdsA family.

The protein localises to the cytoplasm. The catalysed reaction is D-arabinose 5-phosphate + phosphoenolpyruvate + H2O = 3-deoxy-alpha-D-manno-2-octulosonate-8-phosphate + phosphate. The protein operates within carbohydrate biosynthesis; 3-deoxy-D-manno-octulosonate biosynthesis; 3-deoxy-D-manno-octulosonate from D-ribulose 5-phosphate: step 2/3. Its pathway is bacterial outer membrane biogenesis; lipopolysaccharide biosynthesis. The chain is 2-dehydro-3-deoxyphosphooctonate aldolase from Chlamydia abortus (strain DSM 27085 / S26/3) (Chlamydophila abortus).